We begin with the raw amino-acid sequence, 208 residues long: Small ribosomal subunit protein uS5 (208 aa).

One can recognise an S5 DRBM domain in the interval 48-111 (LEDEVLDINM…DAAKLDITYI (64 aa)).

The protein belongs to the universal ribosomal protein uS5 family. As to quaternary structure, part of the 30S ribosomal subunit. Contacts protein S4.

Its function is as follows. With S4 and S12 plays an important role in translational accuracy. The polypeptide is Small ribosomal subunit protein uS5 (Methanosarcina barkeri (strain Fusaro / DSM 804)).